Reading from the N-terminus, the 365-residue chain is 3-dehydroquinate synthase (365 aa).

NAD(+) contacts are provided by residues 75–80 (DAENGK), 109–113 (GAATD), 133–134 (TT), lysine 146, and lysine 155. The Zn(2+) site is built by glutamate 188, histidine 253, and histidine 269.

The protein belongs to the sugar phosphate cyclases superfamily. Dehydroquinate synthase family. Co(2+) serves as cofactor. Zn(2+) is required as a cofactor. It depends on NAD(+) as a cofactor.

It localises to the cytoplasm. It carries out the reaction 7-phospho-2-dehydro-3-deoxy-D-arabino-heptonate = 3-dehydroquinate + phosphate. Its pathway is metabolic intermediate biosynthesis; chorismate biosynthesis; chorismate from D-erythrose 4-phosphate and phosphoenolpyruvate: step 2/7. In terms of biological role, catalyzes the conversion of 3-deoxy-D-arabino-heptulosonate 7-phosphate (DAHP) to dehydroquinate (DHQ). In Corynebacterium glutamicum (strain R), this protein is 3-dehydroquinate synthase.